The sequence spans 469 residues: Glutamine synthetase (469 aa).

The 85-residue stretch at 13 to 97 (KEVRYVDLRF…LRCDIVEPAT (85 aa)) folds into the GS beta-grasp domain. The GS catalytic domain occupies 105-469 (PRSIAKRAEA…PVEFDMYYSL (365 aa)). Residues Glu130 and Glu132 each contribute to the Mg(2+) site. Residue Glu208 participates in ATP binding. Residues Glu213 and Glu221 each coordinate Mg(2+). L-glutamate-binding positions include 265-266 (NG) and Gly266. His270 lines the Mg(2+) pocket. Residues 272-274 (HQS) and Ser274 each bind ATP. L-glutamate is bound by residues Arg322, Glu328, and Arg340. Residues Arg340, Arg345, and Lys353 each coordinate ATP. Glu358 serves as a coordination point for Mg(2+). Residue Arg360 participates in L-glutamate binding. Tyr398 bears the O-AMP-tyrosine mark.

It belongs to the glutamine synthetase family. In terms of assembly, oligomer of 12 subunits arranged in the form of two hexameric ring. It depends on Mg(2+) as a cofactor.

The protein localises to the cytoplasm. The enzyme catalyses L-glutamate + NH4(+) + ATP = L-glutamine + ADP + phosphate + H(+). The activity of this enzyme could be controlled by adenylation under conditions of abundant glutamine. Functionally, catalyzes the ATP-dependent biosynthesis of glutamine from glutamate and ammonia. The protein is Glutamine synthetase of Methylococcus capsulatus (strain ATCC 33009 / NCIMB 11132 / Bath).